Consider the following 100-residue polypeptide: uncharacterized protein (100 aa).

An N-terminal signal peptide occupies residues 1–17 (MIMKYFCSVMIAIALVG). The N-palmitoyl cysteine moiety is linked to residue Cys-18. A lipid anchor (S-diacylglycerol cysteine) is attached at Cys-18.

The protein resides in the cell membrane. This is an uncharacterized protein from Salmonella choleraesuis (strain SC-B67).